The chain runs to 141 residues: Hemoglobin subunit alpha (141 aa).

The 141-residue stretch at 1 to 141 folds into the Globin domain; that stretch reads VLSPADKTNV…VSTVLTSKYR (141 aa). S3 carries the post-translational modification Phosphoserine. K7 carries the N6-succinyllysine modification. Position 8 is a phosphothreonine (T8). K11 carries the post-translational modification N6-succinyllysine. Residue K16 is modified to N6-acetyllysine; alternate. The residue at position 16 (K16) is an N6-succinyllysine; alternate. S35 bears the Phosphoserine mark. The residue at position 40 (K40) is an N6-succinyllysine. Residue H58 coordinates O2. Residue H87 participates in heme b binding. Position 102 is a phosphoserine (S102). The residue at position 108 (T108) is a Phosphothreonine. Phosphoserine occurs at positions 124 and 131. 2 positions are modified to phosphothreonine: T134 and T137. S138 is subject to Phosphoserine.

This sequence belongs to the globin family. As to quaternary structure, heterotetramer of two alpha chains and two beta chains. As to expression, red blood cells.

Involved in oxygen transport from the lung to the various peripheral tissues. Its function is as follows. Hemopressin acts as an antagonist peptide of the cannabinoid receptor CNR1. Hemopressin-binding efficiently blocks cannabinoid receptor CNR1 and subsequent signaling. This Physeter macrocephalus (Sperm whale) protein is Hemoglobin subunit alpha (HBA).